A 507-amino-acid polypeptide reads, in one-letter code: uncharacterized protein (507 aa).

A run of 14 helical transmembrane segments spans residues 8–28 (VKGV…AYLV), 41–61 (VGLF…RAFG), 86–106 (IVFV…LVVI), 130–150 (INIL…VAFF), 171–191 (ILSV…HNAY), 193–213 (PSVS…YIVV), 235–255 (LFSY…LGYL), 275–295 (VAMP…AVLF), 323–343 (IIVT…INIL), 355–375 (IQIL…FNIL), 387–407 (ILYI…PKFG), 408–428 (IIGA…FQIW), 444–464 (ILVI…KDLI), and 467–487 (VILQ…LGIF).

This sequence belongs to the polysaccharide synthase family.

It is found in the cell membrane. This is an uncharacterized protein from Methanocaldococcus jannaschii (strain ATCC 43067 / DSM 2661 / JAL-1 / JCM 10045 / NBRC 100440) (Methanococcus jannaschii).